Reading from the N-terminus, the 372-residue chain is Ligninase A (372 aa).

An N-terminal signal peptide occupies residues 1 to 21 (MAFKQLVAAISLALSLTTANA). A propeptide spanning residues 22 to 28 (AVVKEKR) is cleaved from the precursor. 4 cysteine pairs are disulfide-bonded: Cys31–Cys43, Cys42–Cys313, Cys62–Cys148, and Cys277–Cys345. His75 functions as the Proton acceptor in the catalytic mechanism. Ca(2+) contacts are provided by Asp76, Gly94, Asp96, and Ser98. His204 lines the heme b pocket. Ser205, Asp222, Thr224, Ile227, and Asp229 together coordinate Ca(2+). N-linked (GlcNAc...) asparagine glycosylation is present at Asn285.

It belongs to the peroxidase family. Ligninase subfamily. Requires heme b as cofactor. The cofactor is Ca(2+).

It carries out the reaction 1-(3,4-dimethoxyphenyl)-2-(2-methoxyphenoxy)propane-1,3-diol + H2O2 = 3,4-dimethoxybenzaldehyde + guaiacol + glycolaldehyde + H2O. The catalysed reaction is 2 (3,4-dimethoxyphenyl)methanol + H2O2 = 2 (3,4-dimethoxyphenyl)methanol radical + 2 H2O. It participates in secondary metabolite metabolism; lignin degradation. Its function is as follows. Depolymerization of lignin. Catalyzes the C(alpha)-C(beta) cleavage of the propyl side chains of lignin. The chain is Ligninase A (LIPA) from Phanerodontia chrysosporium (White-rot fungus).